Here is a 410-residue protein sequence, read N- to C-terminus: Shaggy-related protein kinase epsilon (410 aa).

N-acetylalanine is present on alanine 2. One can recognise a Protein kinase domain in the interval 74 to 358 (YMAERIVGQG…AMEAIVHPFF (285 aa)). ATP contacts are provided by residues 80–88 (VGQGSFGIV) and lysine 103. Catalysis depends on aspartate 199, which acts as the Proton acceptor. A Phosphotyrosine modification is found at tyrosine 234.

Belongs to the protein kinase superfamily. CMGC Ser/Thr protein kinase family. GSK-3 subfamily. As to quaternary structure, binds to KIB1. Post-translationally, autophosphorylated mainly on threonine and serine residues.

It catalyses the reaction L-seryl-[protein] + ATP = O-phospho-L-seryl-[protein] + ADP + H(+). It carries out the reaction L-threonyl-[protein] + ATP = O-phospho-L-threonyl-[protein] + ADP + H(+). May mediate extracellular signals to regulate transcription in differentiating cells. The sequence is that of Shaggy-related protein kinase epsilon (ASK5) from Arabidopsis thaliana (Mouse-ear cress).